Reading from the N-terminus, the 262-residue chain is Flap endonuclease Xni (262 aa).

Asp112 is a Mg(2+) binding site. Residues 171–258 enclose the 5'-3' exonuclease domain; the sequence is QQLNDYWAIT…GFNLKDLRYT (88 aa). 3 residues coordinate K(+): Ile179, Val190, and Ile193. The interaction with DNA stretch occupies residues 192-197; it reads GIGSKG.

This sequence belongs to the Xni family. The cofactor is Mg(2+). It depends on K(+) as a cofactor.

In terms of biological role, has flap endonuclease activity. During DNA replication, flap endonucleases cleave the 5'-overhanging flap structure that is generated by displacement synthesis when DNA polymerase encounters the 5'-end of a downstream Okazaki fragment. The sequence is that of Flap endonuclease Xni from Psychromonas ingrahamii (strain DSM 17664 / CCUG 51855 / 37).